Consider the following 149-residue polypeptide: D-aminoacyl-tRNA deacylase (149 aa).

Positions 137 to 138 match the Gly-cisPro motif, important for rejection of L-amino acids motif; sequence GP.

The protein belongs to the DTD family. As to quaternary structure, homodimer.

It localises to the cytoplasm. The enzyme catalyses glycyl-tRNA(Ala) + H2O = tRNA(Ala) + glycine + H(+). It carries out the reaction a D-aminoacyl-tRNA + H2O = a tRNA + a D-alpha-amino acid + H(+). Its function is as follows. An aminoacyl-tRNA editing enzyme that deacylates mischarged D-aminoacyl-tRNAs. Also deacylates mischarged glycyl-tRNA(Ala), protecting cells against glycine mischarging by AlaRS. Acts via tRNA-based rather than protein-based catalysis; rejects L-amino acids rather than detecting D-amino acids in the active site. By recycling D-aminoacyl-tRNA to D-amino acids and free tRNA molecules, this enzyme counteracts the toxicity associated with the formation of D-aminoacyl-tRNA entities in vivo and helps enforce protein L-homochirality. The protein is D-aminoacyl-tRNA deacylase of Desulforamulus reducens (strain ATCC BAA-1160 / DSM 100696 / MI-1) (Desulfotomaculum reducens).